The following is a 593-amino-acid chain: MTAEDSTAAMSSDSAAGSSAKVPEGVAGAPNEAALLALMERTGYSMVQENGQRKYGGPPPGWEGPHPQRGCEVFVGKIPRDVYEDELVPVFEAVGRIYELRLMMDFDGKNRGYAFVMYCHKHEAKRAVRELNNYEIRPGRLLGVCCSVDNCRLFIGGIPKMKKREEILEEIAKVTEGVLDVIVYASAADKMKNRGFAFVEYESHRAAAMARRKLMPGRIQLWGHQIAVDWAEPEIDVDEDVMETVKILYVRNLMIETTEDTIKKSFGQFNPGCVERVKKIRDYAFVHFTSREDAVHAMNNLNGTELEGSCLEVTLAKPVDKEQYSRYQKAARGGGAAEAAQQPSYVYSCDPYTLAYYGYPYNALIGPNRDYFVKAGSIRGRGRGAAGNRAPGPRGSYLGGYSAGRGIYSRYHEGKGKQQEKGYELVPNLEIPTVNPVAIKPGTVAIPAIGAQYSMFPAAPAPKMIEDGKIHTVEHMISPIAVQPDPASAAAAAAAAAAAAAAVIPTVSTPPPFQGRPITPVYTVAPNVQRIPTAGIYGASYVPFAAPATATIATLQKNAAAAAAMYGGYAGYIPQAFPAAAIQVPIPDVYQTY.

Residues 1–20 (MTAEDSTAAMSSDSAAGSSA) are compositionally biased toward low complexity. Positions 1–25 (MTAEDSTAAMSSDSAAGSSAKVPEG) are disordered. 3 RRM domains span residues 71 to 149 (CEVF…CSVD), 151 to 233 (CRLF…WAEP), and 246 to 318 (KILY…LAKP). Arg-332 is modified (omega-N-methylarginine). An asymmetric dimethylarginine; alternate mark is found at Arg-394 and Arg-405. 2 positions are modified to omega-N-methylarginine; alternate: Arg-394 and Arg-405.

The protein belongs to the RRM RBM47 family. As to quaternary structure, homodimer. Interacts with A1CF. Interacts with APOBEC1; form an mRNA editing complex. Interacts with RBPMS.

The protein resides in the nucleus. The protein localises to the cytoplasm. In terms of biological role, single-stranded RNA-binding protein that functions in a variety of RNA processes, including alternative splicing, RNA stabilization, and RNA editing. Functions as an enzyme-substrate adapter for the cytidine deaminase APOBEC1. With APOBEC1 forms an mRNA editing complex involved into cytidine to uridine editing of a variety of mRNA molecules. Through the binding of their 3'UTR, also stabilizes a variety of mRNAs and regulates the expression of genes such as the interferon alpha/beta receptor and interleukin-10. Also involved in the alternative splicing of several genes including TJP1. Binds the pre-mRNA (U)GCAUG consensus sequences in downstream intronic regions of alternative exons, regulating their exclusion and inclusion into mRNAs. Independently of its RNA-binding activity, could negatively regulate MAVS by promoting its lysosomal degradation. The protein is RNA-binding protein 47 of Homo sapiens (Human).